The primary structure comprises 258 residues: Imidazole glycerol phosphate synthase subunit HisF (258 aa).

Active-site residues include D11 and D130.

This sequence belongs to the HisA/HisF family. Heterodimer of HisH and HisF.

Its subcellular location is the cytoplasm. It catalyses the reaction 5-[(5-phospho-1-deoxy-D-ribulos-1-ylimino)methylamino]-1-(5-phospho-beta-D-ribosyl)imidazole-4-carboxamide + L-glutamine = D-erythro-1-(imidazol-4-yl)glycerol 3-phosphate + 5-amino-1-(5-phospho-beta-D-ribosyl)imidazole-4-carboxamide + L-glutamate + H(+). Its pathway is amino-acid biosynthesis; L-histidine biosynthesis; L-histidine from 5-phospho-alpha-D-ribose 1-diphosphate: step 5/9. In terms of biological role, IGPS catalyzes the conversion of PRFAR and glutamine to IGP, AICAR and glutamate. The HisF subunit catalyzes the cyclization activity that produces IGP and AICAR from PRFAR using the ammonia provided by the HisH subunit. The chain is Imidazole glycerol phosphate synthase subunit HisF from Escherichia coli (strain ATCC 8739 / DSM 1576 / NBRC 3972 / NCIMB 8545 / WDCM 00012 / Crooks).